We begin with the raw amino-acid sequence, 825 residues long: Penicillin-binding protein 1A (825 aa).

Topologically, residues 1–6 are cytoplasmic; it reads MKFIKR. A helical; Signal-anchor for type II membrane protein transmembrane segment spans residues 7–27; that stretch reads LLVFSLICIILGVTTIFGFYF. Residues 28–825 lie on the Periplasmic side of the membrane; it reads YVKSDLPDVA…YSTSSGEELF (798 aa). The tract at residues 48–216 is transglycosylase; that stretch reads MQVFSQDGKL…STMNPIYSVE (169 aa). Glu86 serves as the catalytic Proton donor; for transglycosylase activity. Residues 413 to 752 are transpeptidase; that stretch reads PRTQDGAITA…GKTALPAWVE (340 aa). Catalysis depends on Ser471, which acts as the Acyl-ester intermediate; for transpeptidase activity.

This sequence in the N-terminal section; belongs to the glycosyltransferase 51 family. In the C-terminal section; belongs to the transpeptidase family.

Its subcellular location is the cell inner membrane. The catalysed reaction is [GlcNAc-(1-&gt;4)-Mur2Ac(oyl-L-Ala-gamma-D-Glu-L-Lys-D-Ala-D-Ala)](n)-di-trans,octa-cis-undecaprenyl diphosphate + beta-D-GlcNAc-(1-&gt;4)-Mur2Ac(oyl-L-Ala-gamma-D-Glu-L-Lys-D-Ala-D-Ala)-di-trans,octa-cis-undecaprenyl diphosphate = [GlcNAc-(1-&gt;4)-Mur2Ac(oyl-L-Ala-gamma-D-Glu-L-Lys-D-Ala-D-Ala)](n+1)-di-trans,octa-cis-undecaprenyl diphosphate + di-trans,octa-cis-undecaprenyl diphosphate + H(+). It carries out the reaction Preferential cleavage: (Ac)2-L-Lys-D-Ala-|-D-Ala. Also transpeptidation of peptidyl-alanyl moieties that are N-acyl substituents of D-alanine.. It participates in cell wall biogenesis; peptidoglycan biosynthesis. In terms of biological role, cell wall formation. Synthesis of cross-linked peptidoglycan from the lipid intermediates. The enzyme has a penicillin-insensitive transglycosylase N-terminal domain (formation of linear glycan strands) and a penicillin-sensitive transpeptidase C-terminal domain (cross-linking of the peptide subunits). This chain is Penicillin-binding protein 1A (mrcA), found in Vibrio cholerae serotype O1 (strain ATCC 39315 / El Tor Inaba N16961).